Consider the following 541-residue polypeptide: MDIFVANPLLALFVIMAVGLAIGQVKIRGFSLGVAAVLFAGVGFAAVEPDIHIPHLVYILGLSIFVYSIGLESGHAFFALFKSQGVKQNALAITALALITGISIALFSLIHLNGVTAAGLFTGAVTNTPAMAAVVDSLPSIFGDANKVHEVESLPLVAYSLAYPIGVLGVIAAIGLCAKWFRIDHVQEAHDAGVAVEDLFTRQIKVNHVVTGSDLVIDIHHTLGLEIIVSRIERDGQQTLPTASSRIHMGDVLSVVGTAEELDKAAHVLGDLLPGDPFHGHDLDYRRIFVSNQDLVGIPLAKLRPRLSGILITRVRRGDHDHVATPETVLQLGDRVRVVAAHDRMKSVTALFGDSYRRLSDFNLFPLVAGLALGLLVGMIEVPLPGGAALSLGSAGGPLVVALVLGAVGRSGRFVWQVPYGANLALRQLGITLFLAAIGTTAGASFRASLSDPASLTIIAVGAIITLTLAIFVLVVGYKVMKIPYGQTAGMLAGIQTHPAVLSYVSAMTKNDLPALGYTSVYPLAMIAKIIAAQVVLFALT.

5 consecutive transmembrane segments (helical) span residues 4–23, 30–47, 57–79, 91–113, and 156–178; these read FVANPLLALFVIMAVGLAIG, FSLGVAAVLFAGVGFAAV, VYILGLSIFVYSIGLESGHAFFA, LAITALALITGISIALFSLIHLN, and LVAYSLAYPIGVLGVIAAIGLCA. 2 RCK C-terminal domains span residues 187-271 and 273-354; these read QEAH…VLGD and LPGD…LFGD. 5 consecutive transmembrane segments (helical) span residues 362-384, 389-411, 424-446, 456-478, and 516-538; these read FNLFPLVAGLALGLLVGMIEVPL, ALSLGSAGGPLVVALVLGAVGRS, LALRQLGITLFLAAIGTTAGASF, LTIIAVGAIITLTLAIFVLVVGY, and LGYTSVYPLAMIAKIIAAQVVLF.

Belongs to the AAE transporter (TC 2.A.81) family.

It localises to the cell membrane. This is an uncharacterized protein from Corynebacterium diphtheriae (strain ATCC 700971 / NCTC 13129 / Biotype gravis).